The chain runs to 288 residues: Homoserine kinase (288 aa).

79 to 89 contacts ATP; it reads PPARGLGSSSA.

The protein belongs to the GHMP kinase family. Homoserine kinase subfamily.

The protein resides in the cytoplasm. The catalysed reaction is L-homoserine + ATP = O-phospho-L-homoserine + ADP + H(+). The protein operates within amino-acid biosynthesis; L-threonine biosynthesis; L-threonine from L-aspartate: step 4/5. Catalyzes the ATP-dependent phosphorylation of L-homoserine to L-homoserine phosphate. This is Homoserine kinase from Listeria monocytogenes serotype 4b (strain F2365).